Here is a 687-residue protein sequence, read N- to C-terminus: MMTQTLLIELLTEELPPKALNNLGNHFAAAVAEGLEKAQLVDGAAEFTAYASPRRLAVQVKNVKAVQADQKIVKKGPAVANAMKDGAPTKALEGFARGAGAKIEDLTIVHDGKQDVYAYEYVQTGKPLGELLEDIINAAVKKLPIPKVMRWGSSTFTFVRPVHGLVVLHGGDIVNVSVLGLQSSNQTLGHRFLSNGEITIENADSYAAQMREQGKVVASFAERKAAIQTALEGQARRLNASVAADEALLDEVTALVEWPVVLEAGFEEHFLAVPQECLILTMQQNQKYFPLLDQNGKLMNRFLLVSNLQTEDPSHIIRGNERVLRARLSDAEFFYKQDQKATLESRLPKLSSVVYHNKIGSQAERIERLQSIAAHIAKALGADAAAAERAARLAKADLVTEMVGEFPELQGTMGKYYARLDGETEEIAEAVEQHYQPRFAGDNLPNGKVATAVALADKLETLVGIWGIGLIPTGDKDPYALRRAALGILRMLMQYGLDVNELIQTAFDSFPKGLLNEKTPSETADFMQARLAVLLQNDYPQDIVAAVLAKQPRRLDDVVAKLQAVAAFKQLPEAAALAAANKRVQNLLKKADAALGEVNESLLQQDEEKALFAAAQGLQPKIAAAVAEGNFQTALSELASVKPQVDAFFDGVMVMAEDAAVKQNRLNLLNRLAEQMNAVADIALLGE.

The protein belongs to the class-II aminoacyl-tRNA synthetase family. Tetramer of two alpha and two beta subunits.

It is found in the cytoplasm. It catalyses the reaction tRNA(Gly) + glycine + ATP = glycyl-tRNA(Gly) + AMP + diphosphate. This chain is Glycine--tRNA ligase beta subunit, found in Neisseria meningitidis serogroup C (strain 053442).